Reading from the N-terminus, the 156-residue chain is Small ribosomal subunit protein uS7 (156 aa).

It belongs to the universal ribosomal protein uS7 family. As to quaternary structure, part of the 30S ribosomal subunit. Contacts proteins S9 and S11.

In terms of biological role, one of the primary rRNA binding proteins, it binds directly to 16S rRNA where it nucleates assembly of the head domain of the 30S subunit. Is located at the subunit interface close to the decoding center, probably blocks exit of the E-site tRNA. The polypeptide is Small ribosomal subunit protein uS7 (Microcystis aeruginosa (strain NIES-843 / IAM M-2473)).